Reading from the N-terminus, the 77-residue chain is Cell division topological specificity factor (77 aa).

It belongs to the MinE family.

In terms of biological role, prevents the cell division inhibition by proteins MinC and MinD at internal division sites while permitting inhibition at polar sites. This ensures cell division at the proper site by restricting the formation of a division septum at the midpoint of the long axis of the cell. The protein is Cell division topological specificity factor of Helicobacter pylori (strain P12).